The chain runs to 198 residues: uncharacterized protein (198 aa).

This is an uncharacterized protein from Caenorhabditis elegans.